The following is a 123-amino-acid chain: Thioredoxin domain-containing protein 17 (123 aa).

The Thioredoxin domain occupies 41–123 (SWCPDCVTAE…DLVRMMFTED (83 aa)). Residues C43 and C46 each act as nucleophile in the active site. A disulfide bridge connects residues C43 and C46.

Belongs to the thioredoxin family. In terms of tissue distribution, predominantly expressed in liver, brain and muscle. Also expressed in kidney, intestine, skin, stomach, gill and head kidney.

It is found in the cytoplasm. Functionally, disulfide reductase. May participate in various redox reactions through the reversible oxidation of its active center dithiol to a disulfide and catalyze dithiol-disulfide exchange reactions. Has peroxidase activity and may contribute to the elimination of cellular hydrogen peroxide. May function as an antioxidant involved in response to viral infection. This chain is Thioredoxin domain-containing protein 17, found in Epinephelus coioides (Orange-spotted grouper).